Here is a 385-residue protein sequence, read N- to C-terminus: Leucine aminopeptidase 1 (385 aa).

The signal sequence occupies residues 1–20; the sequence is MKFPSLLSLGVAASTTIVAA. Positions 21-87 are excised as a propeptide; the sequence is VPDQKPIGDI…FPKTFAQTTV (67 aa). N-linked (GlcNAc...) asparagine glycosylation occurs at Asn177. Zn(2+) is bound by residues His185, Asp204, Glu243, and Asp270. Cysteines 319 and 323 form a disulfide. His352 contacts Zn(2+).

The protein belongs to the peptidase M28 family. M28E subfamily. Monomer. Requires Zn(2+) as cofactor.

The protein localises to the secreted. In terms of biological role, extracellular aminopeptidase that allows assimilation of proteinaceous substrates. This chain is Leucine aminopeptidase 1 (LAP1), found in Ajellomyces capsulatus (strain G186AR / H82 / ATCC MYA-2454 / RMSCC 2432) (Darling's disease fungus).